Reading from the N-terminus, the 3175-residue chain is Replicase polyprotein 1ab (3175 aa).

The segment at cysteine 25–cysteine 44 adopts a C4-type; atypical zinc-finger fold. The Peptidase C31 domain occupies serine 66–threonine 156. Positions aspartate 157–glycine 260 constitute a Peptidase C32 domain. Residues cysteine 164 and histidine 230 each act as for Nsp1 papain-like cysteine proteinase activity in the active site. Residues glycine 261 to lysine 339 are OTU-like. The region spanning glycine 261–serine 360 is the Peptidase C33 domain. The active-site For Nsp2 cysteine proteinase activity is the cysteine 270. A Zn(2+)-binding site is contributed by cysteine 319. The For Nsp2 cysteine proteinase activity role is filled by histidine 332. Residues cysteine 349, cysteine 354, and cysteine 356 each contribute to the Zn(2+) site. The disordered stretch occupies residues valine 386–glutamate 451. The next 7 membrane-spanning stretches (helical) occupy residues alanine 530 to isoleucine 550, glycine 551 to asparagine 571, phenylalanine 625 to leucine 645, leucine 829 to threonine 849, tyrosine 903 to isoleucine 923, leucine 935 to glycine 955, and leucine 977 to leucine 997. Positions alanine 530 to leucine 645 are HD1. Residues leucine 829–leucine 997 are HD2. Residues glycine 1065–glutamate 1268 enclose the Peptidase S32 domain. Catalysis depends on charge relay system; for 3C-like serine proteinase activity residues histidine 1103, aspartate 1129, and serine 1184. 4 helical membrane-spanning segments follow: residues alanine 1291–glycine 1311, cysteine 1333–isoleucine 1353, alanine 1355–valine 1375, and glycine 1385–glycine 1405. The HD3 stretch occupies residues alanine 1291–glycine 1405. An N-linked (GlcNAc...) asparagine; by host glycan is attached at asparagine 1501. A disordered region spans residues asparagine 1577–aspartate 1614. Residues glutamate 1600–glycine 1612 show a composition bias toward basic and acidic residues. The NiRAN domain maps to leucine 1716–aspartate 1883. The RdRp catalytic domain occupies lysine 2116–serine 2251. One can recognise an AV ZBD domain in the interval serine 2371–proline 2438. Cysteine 2374, cysteine 2377, cysteine 2387, cysteine 2392, cysteine 2395, histidine 2399, histidine 2402, cysteine 2403, cysteine 2412, histidine 2414, cysteine 2423, and cysteine 2426 together coordinate Zn(2+). A (+)RNA virus helicase ATP-binding domain is found at proline 2496–leucine 2661. Glycine 2528 to threonine 2535 serves as a coordination point for ATP. The (+)RNA virus helicase C-terminal domain maps to arginine 2662–glutamate 2793. Positions lysine 2840–arginine 2930 constitute an AV-Nsp11N/CoV-Nsp15M domain. Residues leucine 2932–valine 3054 form the NendoU domain. Catalysis depends on residues histidine 2963, histidine 2978, and lysine 3007.

This sequence belongs to the arteriviridae polyprotein family. As to quaternary structure, nsp1 interacts with cellular transcription cofactor SND1/p100. Specific enzymatic cleavages in vivo by its own proteases yield mature proteins. There are two alternative pathways for processing. Either nsp4-5 is cleaved, which represents the major pathway or the nsp5-6 and nsp6-7 are processed, which represents the minor pathway. The major pathway occurs when nsp2 acts as a cofactor for nsp4.

The protein localises to the host nucleus. Its subcellular location is the host cytoplasm. It localises to the host membrane. The protein resides in the host perinuclear region. The enzyme catalyses RNA(n) + a ribonucleoside 5'-triphosphate = RNA(n+1) + diphosphate. The catalysed reaction is ATP + H2O = ADP + phosphate + H(+). It catalyses the reaction Thiol-dependent hydrolysis of ester, thioester, amide, peptide and isopeptide bonds formed by the C-terminal Gly of ubiquitin (a 76-residue protein attached to proteins as an intracellular targeting signal).. It carries out the reaction uridylyl-uridylyl-ribonucleotide-RNA = a 3'-end uridylyl-2',3'-cyclophospho-uridine-RNA + a 5'-end dephospho-ribonucleoside-RNA. The replicase polyprotein 1ab is a multifunctional protein: it contains the activities necessary for the transcription of negative stranded RNA, leader RNA, subgenomic mRNAs and progeny virion RNA as well as proteinases responsible for the cleavage of the polyprotein into functional products. Its function is as follows. Nsp1 is essential for viral subgenomic mRNA synthesis. Functionally, nsp2 cysteine proteinase which cleaves the nsp2/nsp3 site in the polyprotein. Also displays deubiquitinating and deISGylase activities. The deubiquitinating activity cleaves both ubiquitinated and ISGylated products and may therefore regulate ubiquitin and ISG15 dependent host innate immunity. In terms of biological role, the 3C-like serine proteinase chain is responsible for the majority of cleavages as it cleaves the C-terminus of the polyprotein. The helicase chain, which contains a zinc finger structure, displays RNA and DNA duplex-unwinding activities with 5' to 3' polarity. Its function is as follows. Plays a role in viral transcription/replication and prevents the simultaneous activation of host cell dsRNA sensors, such as MDA5/IFIH1, OAS, and PKR. Acts by degrading the 5'-polyuridines generated during replication of the poly(A) region of viral genomic and subgenomic RNAs. Catalyzes a two-step reaction in which a 2'3'-cyclic phosphate (2'3'-cP) is first generated by 2'-O transesterification, which is then hydrolyzed to a 3'-phosphate (3'-P). If not degraded, poly(U) RNA would hybridize with poly(A) RNA tails and activate host dsRNA sensors. The protein is Replicase polyprotein 1ab (rep) of Equidae (horses).